The following is a 145-amino-acid chain: Transcription antitermination protein NusB (145 aa).

It belongs to the NusB family.

Functionally, involved in transcription antitermination. Required for transcription of ribosomal RNA (rRNA) genes. Binds specifically to the boxA antiterminator sequence of the ribosomal RNA (rrn) operons. The sequence is that of Transcription antitermination protein NusB from Burkholderia mallei (strain NCTC 10247).